A 605-amino-acid polypeptide reads, in one-letter code: Arginyl-tRNA--protein transferase 2 (605 aa).

A compositionally biased stretch (low complexity) spans 496-513; that stretch reads KVSSSSSSPQASETLLES. Positions 496-549 are disordered; that stretch reads KVSSSSSSPQASETLLESTSEHEDMEQGDTNDDDDEMYNSDEDSDSDSSSSRNR. The span at 518–541 shows a compositional bias: acidic residues; sequence EDMEQGDTNDDDDEMYNSDEDSDS.

Belongs to the R-transferase family.

The enzyme catalyses an N-terminal L-alpha-aminoacyl-[protein] + L-arginyl-tRNA(Arg) = an N-terminal L-arginyl-L-aminoacyl-[protein] + tRNA(Arg) + H(+). In terms of biological role, involved in the post-translational conjugation of arginine to the N-terminal aspartate or glutamate of a protein. This arginylation is required for degradation of the protein via the ubiquitin pathway. Component of the N-end rule pathway with ATE1 and PRT6. The N-end rule pathway regulates seed after-ripening, seedling sugar sensitivity, seedling lipid breakdown, and abscisic acid (ABA) sensitivity of germination. The end-rule pathway regulates various aspects of leaf and shoot development. Involved in the oxygen-dependent N-arginylation of RAP2-12, an activator of hypoxic gene expression. This N-terminal modification leads to ubiquitination by PRT6 and subsequent degradation of RAP2-12 under aerobic conditions. Involved in disease resistance. The end-rule pathway plays a role in regulating the timing and amplitude of the immune response following infection with the bacterial pathogen Pseudomonas syringae pv tomato. Regulates the biosynthesis of plant-defense metabolites such as glucosinolates, and the biosynthesis and response to the phytohormone jasmonate (JA), which plays a key role in plant immunity. This is Arginyl-tRNA--protein transferase 2 from Arabidopsis thaliana (Mouse-ear cress).